Here is a 79-residue protein sequence, read N- to C-terminus: Large ribosomal subunit protein uL29 (79 aa).

Belongs to the universal ribosomal protein uL29 family.

The protein is Large ribosomal subunit protein uL29 of Gluconacetobacter diazotrophicus (strain ATCC 49037 / DSM 5601 / CCUG 37298 / CIP 103539 / LMG 7603 / PAl5).